Consider the following 351-residue polypeptide: MIELRNVTKTYSAKQGGVLALSDINLRVSAGEMFGVIGKSGAGKSTLIRCVNLLERPDKGSVIVDGQVLTTLSSKVLRQARHRMGMVFQHFNLLSARTAYQNIAFPLQLLGKNPTEIRKVVLPLLELTDLTAKINAYPSQLSGGQKQRVAIARALVTNPTVLLCDEMTSALDPETTHSILQLLKNINRELNLSILLITHEMEVIKTVADRVAVLDQGRIVEENDVVSLFKRPKTEIAKKFTHSSIKVKLPEILRNRLQKTTLDEGYALLRIDFTEHTAETPIIDEFIRKFDLQVNILQARLEFLRDDSIGMMLVALRNVKDTLPQGIAYLNEKGLQVEVLGYVSADDWRYR.

The 240-residue stretch at I2–T241 folds into the ABC transporter domain. Position 38–45 (G38–S45) interacts with ATP.

Belongs to the ABC transporter superfamily. Methionine importer (TC 3.A.1.24) family. The complex is composed of two ATP-binding proteins (MetN), two transmembrane proteins (MetI) and a solute-binding protein (MetQ).

It localises to the cell inner membrane. It catalyses the reaction L-methionine(out) + ATP + H2O = L-methionine(in) + ADP + phosphate + H(+). The enzyme catalyses D-methionine(out) + ATP + H2O = D-methionine(in) + ADP + phosphate + H(+). Its function is as follows. Part of the ABC transporter complex MetNIQ involved in methionine import. Responsible for energy coupling to the transport system. This chain is Methionine import ATP-binding protein MetN, found in Coxiella burnetii (strain RSA 493 / Nine Mile phase I).